Here is a 123-residue protein sequence, read N- to C-terminus: Ig heavy chain V region HPCM6 (123 aa).

An Ig-like domain is found at Glu-1–Gly-114.

This chain is Ig heavy chain V region HPCM6, found in Mus musculus (Mouse).